The chain runs to 209 residues: Dof zinc finger protein DOF1.6 (209 aa).

Residues 1 to 17 (MPSEPNQTRPTRVQPST) are compositionally biased toward polar residues. The tract at residues 1–29 (MPSEPNQTRPTRVQPSTAAYPPPNLAEPL) is disordered. The segment covering 20–29 (YPPPNLAEPL) has biased composition (pro residues). The Dof-type zinc finger occupies 29–83 (LPCPRCNSTTTKFCYYNNYNLAQPRYYCKSCRRYWTQGGTLRDVPVGGGTRRSSS). Zn(2+) is bound by residues Cys-31, Cys-34, Cys-56, and Cys-59. Residues 70-116 (RDVPVGGGTRRSSSKRHRSFSTTATSSSSSSSVITTTTQEPATTEAS) are disordered. Over residues 89-116 (FSTTATSSSSSSSVITTTTQEPATTEAS) the composition is skewed to low complexity.

The protein localises to the nucleus. In terms of biological role, transcription factor that binds specifically to a 5'-AA[AG]G-3' consensus core sequence. In Arabidopsis thaliana (Mouse-ear cress), this protein is Dof zinc finger protein DOF1.6 (DOF1.6).